Consider the following 485-residue polypeptide: Probable protein phosphatase 2C 3 (485 aa).

Residues 1–11 are compositionally biased toward low complexity; the sequence is MSSPSPSSEAA. 2 disordered regions span residues 1-29 and 43-72; these read MSSP…AAGG and ARAE…AEGG. A compositionally biased stretch (basic residues) spans 13–23; sequence AHHHHHQRRQH. Residues 107-353 form the PPM-type phosphatase domain; that stretch reads SSSSSSSLAS…DDTTCIVVDM (247 aa). The Mn(2+) site is built by Asp-129, Gly-130, Asp-305, and Asp-344.

It belongs to the PP2C family. The cofactor is Mg(2+). Requires Mn(2+) as cofactor.

The enzyme catalyses O-phospho-L-seryl-[protein] + H2O = L-seryl-[protein] + phosphate. It carries out the reaction O-phospho-L-threonyl-[protein] + H2O = L-threonyl-[protein] + phosphate. This chain is Probable protein phosphatase 2C 3, found in Oryza sativa subsp. japonica (Rice).